We begin with the raw amino-acid sequence, 673 residues long: Mechanosensitive ion channel protein 2, chloroplastic (673 aa).

The N-terminal 75 residues, 1-75 (MALYGTLQLS…SVPCRTTAFR (75 aa)), are a transit peptide targeting the chloroplast. The next 5 membrane-spanning stretches (helical) occupy residues 107 to 127 (FPFV…LWGL), 152 to 172 (YHVM…LFIC), 193 to 213 (LNFV…SSLI), 240 to 260 (ALYS…LGFS), and 264 to 284 (WLTA…EILT). The segment at 492–673 (KINGEDKSKS…QPNSGASTEP (182 aa)) is disordered. 3 stretches are compositionally biased toward basic and acidic residues: residues 510–525 (AEQE…KETS), 564–576 (TPKD…TEKP), and 617–642 (GSKR…ELTG). Position 571 is a phosphoserine (serine 571). Positions 661 to 673 (SQSQPNSGASTEP) are enriched in polar residues.

The protein belongs to the MscS (TC 1.A.23) family. In terms of tissue distribution, widely expressed.

Its subcellular location is the plastid. It is found in the chloroplast membrane. Mechanosensitive channel that opens in response to stretch forces in the membrane lipid bilayer. Controls plastid size, shape, and perhaps division during normal plant development by altering ion flux in response to changes in membrane tension. Acts as a component of the chloroplast division machinery. This Arabidopsis thaliana (Mouse-ear cress) protein is Mechanosensitive ion channel protein 2, chloroplastic (MSL2).